The sequence spans 81 residues: Photosystem I iron-sulfur center (81 aa).

4Fe-4S ferredoxin-type domains follow at residues 2–31 (SHSVKIYDTCIGCTQCVRACPLDVLEMVPW) and 39–68 (IASSPRTEDCVGCKRCETACPTDFLSIRVY). [4Fe-4S] cluster-binding residues include Cys11, Cys14, Cys17, Cys21, Cys48, Cys51, Cys54, and Cys58.

As to quaternary structure, the G.violaceus PSI reaction center is composed of one copy each of PsaA,B,C,D,E,F,L,M and Z, and forms trimeric complexes. Requires [4Fe-4S] cluster as cofactor.

The protein localises to the cell inner membrane. It catalyses the reaction reduced [plastocyanin] + hnu + oxidized [2Fe-2S]-[ferredoxin] = oxidized [plastocyanin] + reduced [2Fe-2S]-[ferredoxin]. In terms of biological role, apoprotein for the two 4Fe-4S centers FA and FB of photosystem I (PSI); essential for photochemical activity. FB is the terminal electron acceptor of PSI, donating electrons to ferredoxin. The C-terminus interacts with PsaA/B/D and helps assemble the protein into the PSI complex. Required for binding of PsaD and PsaE to PSI. PSI is a plastocyanin/cytochrome c6-ferredoxin oxidoreductase, converting photonic excitation into a charge separation, which transfers an electron from the donor P700 chlorophyll pair to the spectroscopically characterized acceptors A0, A1, FX, FA and FB in turn. The sequence is that of Photosystem I iron-sulfur center from Gloeobacter violaceus (strain ATCC 29082 / PCC 7421).